A 459-amino-acid chain; its full sequence is Siroheme synthase 2 (459 aa).

Residues 1–204 are precorrin-2 dehydrogenase /sirohydrochlorin ferrochelatase; that stretch reads MDYLPIFCQL…EDRERVQQLT (204 aa). NAD(+) contacts are provided by residues 22–23 and 43–44; these read EI and LD. At Ser128 the chain carries Phosphoserine. Positions 216–459 are uroporphyrinogen-III C-methyltransferase; it reads GEVTLVGAGP…KLSWFSDQTA (244 aa). Pro225 is an S-adenosyl-L-methionine binding site. Residue Asp248 is the Proton acceptor of the active site. Catalysis depends on Lys270, which acts as the Proton donor. Residues 301 to 303, Ile306, 331 to 332, Met382, and Gly411 each bind S-adenosyl-L-methionine; these read GGD and TA.

In the N-terminal section; belongs to the precorrin-2 dehydrogenase / sirohydrochlorin ferrochelatase family. It in the C-terminal section; belongs to the precorrin methyltransferase family.

The catalysed reaction is uroporphyrinogen III + 2 S-adenosyl-L-methionine = precorrin-2 + 2 S-adenosyl-L-homocysteine + H(+). The enzyme catalyses precorrin-2 + NAD(+) = sirohydrochlorin + NADH + 2 H(+). It carries out the reaction siroheme + 2 H(+) = sirohydrochlorin + Fe(2+). It participates in cofactor biosynthesis; adenosylcobalamin biosynthesis; precorrin-2 from uroporphyrinogen III: step 1/1. It functions in the pathway cofactor biosynthesis; adenosylcobalamin biosynthesis; sirohydrochlorin from precorrin-2: step 1/1. Its pathway is porphyrin-containing compound metabolism; siroheme biosynthesis; precorrin-2 from uroporphyrinogen III: step 1/1. The protein operates within porphyrin-containing compound metabolism; siroheme biosynthesis; siroheme from sirohydrochlorin: step 1/1. It participates in porphyrin-containing compound metabolism; siroheme biosynthesis; sirohydrochlorin from precorrin-2: step 1/1. In terms of biological role, multifunctional enzyme that catalyzes the SAM-dependent methylations of uroporphyrinogen III at position C-2 and C-7 to form precorrin-2 via precorrin-1. Then it catalyzes the NAD-dependent ring dehydrogenation of precorrin-2 to yield sirohydrochlorin. Finally, it catalyzes the ferrochelation of sirohydrochlorin to yield siroheme. This Pectobacterium atrosepticum (strain SCRI 1043 / ATCC BAA-672) (Erwinia carotovora subsp. atroseptica) protein is Siroheme synthase 2.